A 328-amino-acid polypeptide reads, in one-letter code: Peroxidase 63 (328 aa).

Residues 1 to 27 (MAEQSQLKNLTIILLLLCLSFQSLSFA) form the signal peptide. 4 disulfide bridges follow: Cys41–Cys122, Cys74–Cys79, Cys128–Cys324, and Cys207–Cys234. His72 functions as the Proton acceptor in the catalytic mechanism. Residues Asp73, Gly78, Asp80, and Ser82 each coordinate Ca(2+). Pro170 lines the substrate pocket. Residue His200 participates in heme b binding. Thr201 lines the Ca(2+) pocket. 2 N-linked (GlcNAc...) asparagine glycosylation sites follow: Asn217 and Asn218. Positions 248, 251, and 256 each coordinate Ca(2+).

Belongs to the peroxidase family. Classical plant (class III) peroxidase subfamily. Requires heme b as cofactor. Ca(2+) serves as cofactor.

It localises to the secreted. It catalyses the reaction 2 a phenolic donor + H2O2 = 2 a phenolic radical donor + 2 H2O. In terms of biological role, removal of H(2)O(2), oxidation of toxic reductants, biosynthesis and degradation of lignin, suberization, auxin catabolism, response to environmental stresses such as wounding, pathogen attack and oxidative stress. These functions might be dependent on each isozyme/isoform in each plant tissue. In Arabidopsis thaliana (Mouse-ear cress), this protein is Peroxidase 63 (PER63).